A 361-amino-acid chain; its full sequence is 3-dehydroquinate synthase (361 aa).

This sequence belongs to the archaeal-type DHQ synthase family.

The enzyme catalyses 2-amino-2,3,7-trideoxy-D-lyxo-hept-6-ulosonate + NAD(+) + H2O = 3-dehydroquinate + NH4(+) + NADH + H(+). In terms of biological role, catalyzes the oxidative deamination and cyclization of 2-amino-3,7-dideoxy-D-threo-hept-6-ulosonic acid (ADH) to yield 3-dehydroquinate (DHQ), which is fed into the canonical shikimic pathway of aromatic amino acid biosynthesis. The protein is 3-dehydroquinate synthase (aroB') of Methanocaldococcus jannaschii (strain ATCC 43067 / DSM 2661 / JAL-1 / JCM 10045 / NBRC 100440) (Methanococcus jannaschii).